Here is a 158-residue protein sequence, read N- to C-terminus: Small ribosomal subunit protein uS19 (158 aa).

This sequence belongs to the universal ribosomal protein uS19 family.

In terms of biological role, protein S19 forms a complex with S13 that binds strongly to the 16S ribosomal RNA. The chain is Small ribosomal subunit protein uS19 from Pyrobaculum calidifontis (strain DSM 21063 / JCM 11548 / VA1).